Consider the following 951-residue polypeptide: UvrABC system protein A (951 aa).

ATP is bound at residue 33–40 (GLSGSGKS). The C4-type zinc-finger motif lies at 252 to 279 (CPICGFTVGELEPRLFSFNAPQGACPDC). ABC transporter domains follow at residues 309–587 (WNPI…RKSL) and 607–935 (GNGK…QYLK). An ATP-binding site is contributed by 639-646 (GVSGSGKS). The segment at 738–764 (CEACHGDGILKIEMNFLPDVFVPCEVC) adopts a C4-type zinc-finger fold.

It belongs to the ABC transporter superfamily. UvrA family. Forms a heterotetramer with UvrB during the search for lesions.

It localises to the cytoplasm. The UvrABC repair system catalyzes the recognition and processing of DNA lesions. UvrA is an ATPase and a DNA-binding protein. A damage recognition complex composed of 2 UvrA and 2 UvrB subunits scans DNA for abnormalities. When the presence of a lesion has been verified by UvrB, the UvrA molecules dissociate. This chain is UvrABC system protein A, found in Lactiplantibacillus plantarum (strain ATCC BAA-793 / NCIMB 8826 / WCFS1) (Lactobacillus plantarum).